The sequence spans 401 residues: MAKQKFERTKPHVNVGTIGHVDHGKTTLTAAITKVLALQGAAQFVSYDQIDNAPEERARGITIAIRHVEYQTAKRHYAHVDCPGHADYIKNMITGAAQMDGAILVVSAPDGPMPQTREHVLLARQVQVPAMVVFLNKVDMMDDEELLELVELELRELLSNHGFPGDEIPIIRGSALAALSSTSTDINAPEYQCILDLMNAVDEYIPTPVREVDKPFLMPIEDVFGIKGRGTVVTGRIERGKVKMGDTVEIVGMSHEAPKKTVVTGVEMFQKTLDEGIAGDNVGVLLRGIERTEVERGQVLAAPGSIKPHAKFKANVYVLKKEEGGRHTPFFPGYRPQFYIRTTDVTGAISLPAGVEMVMPGDNIEMLVELIVPVAIEEGLRFAIREGGRTVGAGVVSAIVD.

Residues 10-209 (KPHVNVGTIG…AVDEYIPTPV (200 aa)) enclose the tr-type G domain. Positions 19 to 26 (GHVDHGKT) are G1. 19 to 26 (GHVDHGKT) contacts GTP. Position 26 (Thr26) interacts with Mg(2+). The tract at residues 60–64 (GITIA) is G2. A G3 region spans residues 81 to 84 (DCPG). GTP contacts are provided by residues 81 to 85 (DCPGH) and 136 to 139 (NKVD). Residues 136–139 (NKVD) form a G4 region. Positions 174–176 (SAL) are G5.

It belongs to the TRAFAC class translation factor GTPase superfamily. Classic translation factor GTPase family. EF-Tu/EF-1A subfamily. Monomer.

The protein resides in the cytoplasm. The catalysed reaction is GTP + H2O = GDP + phosphate + H(+). In terms of biological role, GTP hydrolase that promotes the GTP-dependent binding of aminoacyl-tRNA to the A-site of ribosomes during protein biosynthesis. The protein is Elongation factor Tu 1 of Roseiflexus castenholzii (strain DSM 13941 / HLO8).